The following is a 210-amino-acid chain: Casparian strip membrane protein 1 (210 aa).

A disordered region spans residues 1-25 (MEKSEATTIDVAETSRESKGKAPLL). The Cytoplasmic portion of the chain corresponds to 1-48 (MEKSEATTIDVAETSRESKGKAPLLRDPPAWVPAAVERQRAAPAYKRG). A helical transmembrane segment spans residues 49–69 (VAIFDLILRISAATAALAATI). Residues 70–98 (TMGTTEQTLPFFTQFFQFQASYDDLPTFT) lie on the Extracellular side of the membrane. Residues 99–119 (FFVIAMSIVTGYLVLSVPFSI) traverse the membrane as a helical segment. The Cytoplasmic portion of the chain corresponds to 120–138 (VCIARPVAAAPRLLLILCD). The helical transmembrane segment at 139–159 (TLAVTLNTSAAGASAAIVYLA) threads the bilayer. Topologically, residues 160–183 (HNGNSDANWLAICQQFNDFCQRTS) are extracellular. The helical transmembrane segment at 184–204 (GAVVASFVAVVLLIFLVVLSA) threads the bilayer. Residues 205 to 210 (SALKKH) lie on the Cytoplasmic side of the membrane.

This sequence belongs to the Casparian strip membrane proteins (CASP) family. In terms of assembly, homodimer and heterodimers.

It localises to the cell membrane. Regulates membrane-cell wall junctions and localized cell wall deposition. Required for establishment of the Casparian strip membrane domain (CSD) and the subsequent formation of Casparian strips, a cell wall modification of the root endodermis that determines an apoplastic barrier between the intraorganismal apoplasm and the extraorganismal apoplasm and prevents lateral diffusion. The chain is Casparian strip membrane protein 1 from Erythranthe guttata (Yellow monkey flower).